Consider the following 377-residue polypeptide: Palmitoyltransferase ZDHHC16 (377 aa).

Topologically, residues 1–79 (MRGQWSLLLG…WLVDNVIRWC (79 aa)) are cytoplasmic. Residues 80-100 (GVVFVVLVIVLTSSIVAIAYL) traverse the membrane as a helical segment. At 101-116 (CVLPLILQTYSVPRLC) the chain is on the lumenal side. Residues 117–137 (WHFFYSHWNLILIVFHYYQAI) traverse the membrane as a helical segment. The Cytoplasmic segment spans residues 138 to 198 (TTPPGYPPQG…NNCVGHYNHR (61 aa)). A DHHC domain is found at 155–205 (SICKKCINPKPARTHHCSICNRCVLKMDHHCPWLNNCVGHYNHRYFFSFCF). The S-palmitoyl cysteine intermediate role is filled by Cys-185. A helical membrane pass occupies residues 199 to 219 (YFFSFCFFMTLGCVYCSYGSW). The Lumenal segment spans residues 220–266 (DLFREAYAAIEKMKQLDKNKLQAVANQTYHQTPPPTFSFRERVTHKS). The chain crosses the membrane as a helical span at residues 267–287 (LVYLWFLCSSVALALGALTIW). Residues 288-377 (HAVLISRGET…TAHSASVMAV (90 aa)) lie on the Cytoplasmic side of the membrane.

The protein belongs to the DHHC palmitoyltransferase family. As to quaternary structure, interacts with ABL1. Interacts with COPS5/JAB1.

The protein resides in the endoplasmic reticulum membrane. It carries out the reaction L-cysteinyl-[protein] + hexadecanoyl-CoA = S-hexadecanoyl-L-cysteinyl-[protein] + CoA. In terms of biological role, palmitoyl acyltransferase that mediates palmitoylation of proteins such as PLN and ZDHHC6. Required during embryonic heart development and cardiac function, possibly by mediating palmitoylation of PLN, thereby affecting PLN phosphorylation and homooligomerization. Also required for eye development. Palmitoylates ZDHHC6, affecting the quaternary assembly of ZDHHC6, its localization, stability and function. May play a role in DNA damage response. May be involved in apoptosis regulation. Involved in the proliferation of neural stem cells by regulating the FGF/ERK pathway. The protein is Palmitoyltransferase ZDHHC16 of Bos taurus (Bovine).